A 393-amino-acid chain; its full sequence is Isocitrate dehydrogenase [NADP] (393 aa).

Positions 102, 104, 108, 118, and 142 each coordinate D-threo-isocitrate. Asp-283 contacts Mg(2+).

This sequence belongs to the isocitrate and isopropylmalate dehydrogenases family. As to quaternary structure, homodimer. Requires Mg(2+) as cofactor. The cofactor is Mn(2+).

It catalyses the reaction D-threo-isocitrate + NADP(+) = 2-oxoglutarate + CO2 + NADPH. Catalyzes the oxidative decarboxylation of isocitrate to 2-oxoglutarate and carbon dioxide with the concomitant reduction of NADP(+). The polypeptide is Isocitrate dehydrogenase [NADP] (icd) (Streptococcus mutans serotype c (strain ATCC 700610 / UA159)).